Reading from the N-terminus, the 189-residue chain is Hypoxanthine/guanine phosphoribosyltransferase (189 aa).

Belongs to the purine/pyrimidine phosphoribosyltransferase family. Archaeal HPRT subfamily. As to quaternary structure, homodimer.

The protein resides in the cytoplasm. It carries out the reaction IMP + diphosphate = hypoxanthine + 5-phospho-alpha-D-ribose 1-diphosphate. It catalyses the reaction GMP + diphosphate = guanine + 5-phospho-alpha-D-ribose 1-diphosphate. It participates in purine metabolism; IMP biosynthesis via salvage pathway; IMP from hypoxanthine: step 1/1. Functionally, catalyzes a salvage reaction resulting in the formation of IMP that is energically less costly than de novo synthesis. This is Hypoxanthine/guanine phosphoribosyltransferase (hpt) from Methanosarcina acetivorans (strain ATCC 35395 / DSM 2834 / JCM 12185 / C2A).